Consider the following 253-residue polypeptide: MKTQWGEVWTHLLLLLLGFLHVSWAQSSCTGPPGIPGIPGVPGVPGSDGQPGTPGIKGEKGLPGLAGDLGEFGEKGDPGIPGTPGKVGPKGPVGPKGTPGPSGPRGPKGDSGDYGATQKVAFSALRTINSPLRPNQVIRFEKVITNANENYEPRNGKFTCKVPGLYYFTYHASSRGNLCVNLVRGRDRDSMQKVVTFCDYAQNTFQVTTGGVVLKLEQEEVVHLQATDKNSLLGIEGANSIFTGFLLFPDMDA.

The first 25 residues, Met-1 to Ala-25, serve as a signal peptide directing secretion. Position 26 is a pyrrolidone carboxylic acid (Gln-26). One can recognise a Collagen-like domain in the interval Cys-29 to Gly-112. 5 positions are modified to 4-hydroxyproline: Pro-33, Pro-36, Pro-39, Pro-51, and Pro-54. Residues Ile-35–Gly-115 are disordered. 2 positions are modified to 5-hydroxylysine: Lys-57 and Lys-60. A 4-hydroxyproline modification is found at Pro-63. Residue Lys-75 is modified to 5-hydroxylysine. The span at Pro-78–Lys-96 shows a compositional bias: low complexity. 4-hydroxyproline is present on residues Pro-81 and Pro-84. Lys-90 and Lys-96 each carry 5-hydroxylysine. At Pro-99 the chain carries 4-hydroxyproline. Position 108 is a 5-hydroxylysine (Lys-108). A C1q domain is found at Gly-115 to Ala-253. A disulfide bridge connects residues Cys-179 and Cys-198. The Ca(2+) site is built by Asp-199, Tyr-200, and Gln-206.

Core component of the complement C1 complex, a calcium-dependent complex composed of 1 molecule of the C1Q subcomplex, 2 molecules of C1R and 2 molecules of C1S. The C1Q subcomplex is composed 18 subunits: 3 chains of C1QA, C1QB, and C1QC trimerize to form 6 collagen-like triple helices connected to six globular ligand-recognition modules (C1q domain). In terms of processing, hydroxylated on lysine and proline residues. Hydroxylated lysine residues can be glycosylated. Mouse C1Q contains up to 64.0 hydroxylysine-galactosylglucose residues. Total percentage hydroxylysine residues glycosylated is 95.1%. Contains no hydroxylysine-monosaccharides. In terms of tissue distribution, highest expression in thioglycolate-activated peritoneal macrophages. Also found in spleen, thymus and heart. Very weak expression liver, kidney, lung and intestine.

It localises to the secreted. It is found in the cell surface. With respect to regulation, the C1Q subcomplex is inhibited by sulfated molecules, such as triterpenoid sulfates, heparan sulfate, or chondroitin sulfates. Its function is as follows. Core component of the complement C1 complex, a multiprotein complex that initiates the classical pathway of the complement system, a cascade of proteins that leads to phagocytosis and breakdown of pathogens and signaling that strengthens the adaptive immune system. The classical complement pathway is initiated by the C1Q subcomplex of the C1 complex, which specifically binds IgG or IgM immunoglobulins complexed with antigens, forming antigen-antibody complexes on the surface of pathogens: C1QA, together with C1QB and C1QC, specifically recognizes and binds the Fc regions of IgG or IgM via its C1q domain. Immunoglobulin-binding activates the proenzyme C1R, which cleaves C1S, initiating the proteolytic cascade of the complement system. The C1Q subcomplex is activated by a hexamer of IgG complexed with antigens, while it is activated by a pentameric IgM. The C1Q subcomplex also recognizes and binds phosphatidylserine exposed on the surface of cells undergoing programmed cell death, possibly promoting activation of the complement system. The polypeptide is Complement C1q subcomponent subunit B (Mus musculus (Mouse)).